The primary structure comprises 304 residues: Ribosomal RNA small subunit methyltransferase H (304 aa).

Residues 37-39, D57, F79, D100, and H107 each bind S-adenosyl-L-methionine; that span reads GGH.

Belongs to the methyltransferase superfamily. RsmH family.

Its subcellular location is the cytoplasm. The enzyme catalyses cytidine(1402) in 16S rRNA + S-adenosyl-L-methionine = N(4)-methylcytidine(1402) in 16S rRNA + S-adenosyl-L-homocysteine + H(+). In terms of biological role, specifically methylates the N4 position of cytidine in position 1402 (C1402) of 16S rRNA. The sequence is that of Ribosomal RNA small subunit methyltransferase H from Bacteroides fragilis (strain ATCC 25285 / DSM 2151 / CCUG 4856 / JCM 11019 / LMG 10263 / NCTC 9343 / Onslow / VPI 2553 / EN-2).